The following is a 166-amino-acid chain: Probable DHNTP pyrophosphohydrolase (166 aa).

A Nudix hydrolase domain is found at 42–166 (DLQLSASALV…FKKYYRYKNI (125 aa)). The Nudix box signature appears at 73–94 (GHVELKESPLDTAIREFHEETG). Glutamate 88 and glutamate 92 together coordinate Mg(2+).

It belongs to the Nudix hydrolase family. Monomer. Mg(2+) serves as cofactor.

Its pathway is cofactor biosynthesis; tetrahydrofolate biosynthesis; 2-amino-4-hydroxy-6-hydroxymethyl-7,8-dihydropteridine diphosphate from 7,8-dihydroneopterin triphosphate: step 1/4. Probably mediates the removal of pyrophosphate from dihydroneopterin triphosphate (DHNTP), a possible step in the pterin branch of the folate synthesis pathway. In Lactococcus lactis subsp. cremoris (strain MG1363), this protein is Probable DHNTP pyrophosphohydrolase (folQ).